A 147-amino-acid polypeptide reads, in one-letter code: Hemoglobin subunit epsilon (147 aa).

Residues His-3 to His-147 enclose the Globin domain. Phosphoserine is present on residues Ser-14 and Ser-51. His-64 and His-93 together coordinate heme b.

Belongs to the globin family. Heterotetramer of two alpha chains and two epsilon chains in early embryonic hemoglobin Gower-2; two zeta chains and two epsilon chains in early embryonic hemoglobin Gower-1. As to expression, red blood cells.

In terms of biological role, the epsilon chain is a beta-type chain of early mammalian embryonic hemoglobin. This Saimiri boliviensis boliviensis (Bolivian squirrel monkey) protein is Hemoglobin subunit epsilon (HBE1).